The sequence spans 594 residues: Proteasome-associated ATPase (594 aa).

A compositionally biased stretch (polar residues) spans 1 to 10 (MMETPNNDSS). The segment at 1–23 (MMETPNNDSSRTPDEAAGAPDPE) is disordered. A coiled-coil region spans residues 35-86 (ADRQVNILRDKLRHIDRQLAAATQNNSKLVGMLETAKAEILRLKNALDQEGQ). 282 to 287 (GCGKTL) is an ATP binding site. The tract at residues 593 to 594 (YL) is docks into pockets in the proteasome alpha-ring.

It belongs to the AAA ATPase family. Homohexamer. Assembles into a hexameric ring structure that caps the 20S proteasome core. Strongly interacts with the prokaryotic ubiquitin-like protein Pup through a hydrophobic interface; the interacting region of ARC lies in its N-terminal coiled-coil domain. There is one Pup binding site per ARC hexamer ring. Upon ATP-binding, the C-terminus of ARC interacts with the alpha-rings of the proteasome core, possibly by binding to the intersubunit pockets.

The protein operates within protein degradation; proteasomal Pup-dependent pathway. Its function is as follows. ATPase which is responsible for recognizing, binding, unfolding and translocation of pupylated proteins into the bacterial 20S proteasome core particle. May be essential for opening the gate of the 20S proteasome via an interaction with its C-terminus, thereby allowing substrate entry and access to the site of proteolysis. Thus, the C-termini of the proteasomal ATPase may function like a 'key in a lock' to induce gate opening and therefore regulate proteolysis. The sequence is that of Proteasome-associated ATPase from Arthrobacter sp. (strain FB24).